The following is a 142-amino-acid chain: Hemoglobin subunit alpha (142 aa).

One can recognise a Globin domain in the interval 2 to 142; it reads VLSPADKTNV…VSTVLTSKYR (141 aa). Position 4 is a phosphoserine (serine 4). Position 8 is an N6-succinyllysine (lysine 8). Threonine 9 carries the post-translational modification Phosphothreonine. The residue at position 12 (lysine 12) is an N6-succinyllysine. Lysine 17 is modified (N6-acetyllysine; alternate). At lysine 17 the chain carries N6-succinyllysine; alternate. Tyrosine 25 is subject to Phosphotyrosine. Position 36 is a phosphoserine (serine 36). Lysine 41 is modified (N6-succinyllysine). Phosphoserine is present on serine 50. Histidine 59 contacts O2. Histidine 88 contributes to the heme b binding site. At serine 103 the chain carries Phosphoserine. Position 109 is a phosphothreonine (threonine 109). A phosphoserine mark is found at serine 125 and serine 132. A phosphothreonine mark is found at threonine 135 and threonine 138. Serine 139 is subject to Phosphoserine.

The protein belongs to the globin family. In terms of assembly, heterotetramer of two alpha chains and two beta chains. As to expression, red blood cells.

Its function is as follows. Involved in oxygen transport from the lung to the various peripheral tissues. In terms of biological role, hemopressin acts as an antagonist peptide of the cannabinoid receptor CNR1. Hemopressin-binding efficiently blocks cannabinoid receptor CNR1 and subsequent signaling. This Piliocolobus badius (Western red colobus) protein is Hemoglobin subunit alpha (HBA).